A 449-amino-acid chain; its full sequence is Probable rhamnogalacturonase E (449 aa).

The first 21 residues, Met-1–Gly-21, serve as a signal peptide directing secretion. Cys-42 and Cys-68 are disulfide-bonded. Asn-53, Asn-91, and Asn-106 each carry an N-linked (GlcNAc...) asparagine glycan. Asp-221 serves as the catalytic Proton donor. Residues Cys-223 and Cys-240 are joined by a disulfide bond. N-linked (GlcNAc...) asparagine glycosylation is found at Asn-241 and Asn-256. His-296 is a catalytic residue. The N-linked (GlcNAc...) asparagine glycan is linked to Asn-323. Cystine bridges form between Cys-346–Cys-352 and Cys-374–Cys-383.

The protein belongs to the glycosyl hydrolase 28 family.

Its subcellular location is the secreted. The catalysed reaction is Endohydrolysis of alpha-D-GalA-(1-&gt;2)-alpha-L-Rha glycosidic bond in the rhamnogalacturonan I backbone with initial inversion of anomeric configuration releasing oligosaccharides with beta-D-GalA at the reducing end.. Functionally, pectinolytic enzymes consist of four classes of enzymes: pectine lyase, polygalacturonase, pectin methylesterase and rhamnogalacturonase. Hydrolyzes alpha-D-galacturonopyranosyl-(1,2)-alpha-L-rhamnopyranosyl linkages in the backbone of the hairy regions of pectins. This chain is Probable rhamnogalacturonase E (rhgE), found in Aspergillus flavus (strain ATCC 200026 / FGSC A1120 / IAM 13836 / NRRL 3357 / JCM 12722 / SRRC 167).